The sequence spans 291 residues: N-acetylmannosamine kinase (291 aa).

ATP is bound by residues 5–12 and 132–139; these read AIDIGGTK and GVGGGVVS. 4 residues coordinate Zn(2+): His-156, Cys-166, Cys-168, and Cys-173.

It belongs to the ROK (NagC/XylR) family. NanK subfamily. As to quaternary structure, homodimer.

The enzyme catalyses an N-acyl-D-mannosamine + ATP = an N-acyl-D-mannosamine 6-phosphate + ADP + H(+). The protein operates within amino-sugar metabolism; N-acetylneuraminate degradation; D-fructose 6-phosphate from N-acetylneuraminate: step 2/5. Its function is as follows. Catalyzes the phosphorylation of N-acetylmannosamine (ManNAc) to ManNAc-6-P. This chain is N-acetylmannosamine kinase, found in Escherichia coli O127:H6 (strain E2348/69 / EPEC).